The following is a 237-amino-acid chain: Uridylate kinase (237 aa).

An ATP-binding site is contributed by 9-12 (KLSG). Position 51 (Gly-51) interacts with UMP. ATP contacts are provided by Gly-52 and Arg-56. Residues Asp-71 and 132 to 139 (CGNPFFTT) each bind UMP. ATP contacts are provided by Thr-159, Tyr-165, and Asp-168.

The protein belongs to the UMP kinase family. In terms of assembly, homohexamer.

Its subcellular location is the cytoplasm. It catalyses the reaction UMP + ATP = UDP + ADP. The protein operates within pyrimidine metabolism; CTP biosynthesis via de novo pathway; UDP from UMP (UMPK route): step 1/1. With respect to regulation, inhibited by UTP. Its function is as follows. Catalyzes the reversible phosphorylation of UMP to UDP. The polypeptide is Uridylate kinase (Prochlorococcus marinus (strain NATL1A)).